Reading from the N-terminus, the 446-residue chain is Alkylglycerol monooxygenase (446 aa).

A run of 2 helical transmembrane segments spans residues 43-63 (ATVY…AWKG) and 110-130 (WDSP…YYWF). The region spanning 118–248 (LTFLGVDFGY…LIIWDRMFGT (131 aa)) is the Fatty acid hydroxylase domain. The Histidine box-1 motif lies at 131-135 (HRMAH). Residues 144–148 (HQTHH) carry the Histidine box-2 motif. A helical membrane pass occupies residues 167-187 (YFSWMFYWPMAFCIPPSVFAV). Positions 220–224 (HRVHH) match the Histidine box-3 motif. A run of 3 helical transmembrane segments spans residues 339 to 359 (MMHF…KLIL), 362 to 382 (ATLL…GFIF), and 412 to 434 (VPYL…GLKA).

This sequence belongs to the sterol desaturase family. TMEM195 subfamily. Fe cation is required as a cofactor.

It localises to the endoplasmic reticulum membrane. The catalysed reaction is 1-O-(1,2-saturated-alkyl)-sn-glycerol + (6R)-L-erythro-5,6,7,8-tetrahydrobiopterin + O2 = a 1-(1-hydroxyalkyl)-sn-glycerol + (6R)-L-erythro-6,7-dihydrobiopterin + H2O. Glyceryl-ether monooxygenase that cleaves the O-alkyl bond of ether lipids. Ether lipids are essential components of brain membranes. The polypeptide is Alkylglycerol monooxygenase (agmo) (Xenopus tropicalis (Western clawed frog)).